The following is a 396-amino-acid chain: Arginine biosynthesis bifunctional protein ArgJ (396 aa).

The substrate site is built by Thr-150, Lys-177, Thr-188, Glu-267, Asn-391, and Thr-396. Thr-188 acts as the Nucleophile in catalysis.

It belongs to the ArgJ family. As to quaternary structure, heterotetramer of two alpha and two beta chains.

Its subcellular location is the cytoplasm. The enzyme catalyses N(2)-acetyl-L-ornithine + L-glutamate = N-acetyl-L-glutamate + L-ornithine. It catalyses the reaction L-glutamate + acetyl-CoA = N-acetyl-L-glutamate + CoA + H(+). It participates in amino-acid biosynthesis; L-arginine biosynthesis; L-ornithine and N-acetyl-L-glutamate from L-glutamate and N(2)-acetyl-L-ornithine (cyclic): step 1/1. The protein operates within amino-acid biosynthesis; L-arginine biosynthesis; N(2)-acetyl-L-ornithine from L-glutamate: step 1/4. Functionally, catalyzes two activities which are involved in the cyclic version of arginine biosynthesis: the synthesis of N-acetylglutamate from glutamate and acetyl-CoA as the acetyl donor, and of ornithine by transacetylation between N(2)-acetylornithine and glutamate. The polypeptide is Arginine biosynthesis bifunctional protein ArgJ (Wolinella succinogenes (strain ATCC 29543 / DSM 1740 / CCUG 13145 / JCM 31913 / LMG 7466 / NCTC 11488 / FDC 602W) (Vibrio succinogenes)).